The primary structure comprises 363 residues: Probable iron/ascorbate oxidoreductase DDB_G0283291 (363 aa).

Residues 197 to 306 form the Fe2OG dioxygenase domain; the sequence is IFNYPSIISS…RISFPLFFDP (110 aa). Fe cation contacts are provided by histidine 230, aspartate 232, and histidine 286. A 2-oxoglutarate-binding site is contributed by arginine 297.

This sequence belongs to the iron/ascorbate-dependent oxidoreductase family. It depends on Fe(2+) as a cofactor.

In Dictyostelium discoideum (Social amoeba), this protein is Probable iron/ascorbate oxidoreductase DDB_G0283291.